The chain runs to 92 residues: Small ribosomal subunit protein uS19 (92 aa).

Belongs to the universal ribosomal protein uS19 family.

Protein S19 forms a complex with S13 that binds strongly to the 16S ribosomal RNA. This Magnetococcus marinus (strain ATCC BAA-1437 / JCM 17883 / MC-1) protein is Small ribosomal subunit protein uS19.